The sequence spans 238 residues: Pyridoxine 5'-phosphate synthase (238 aa).

3-amino-2-oxopropyl phosphate is bound at residue Asn6. 8 to 9 contributes to the 1-deoxy-D-xylulose 5-phosphate binding site; it reads DH. Position 17 (Arg17) interacts with 3-amino-2-oxopropyl phosphate. His42 functions as the Proton acceptor in the catalytic mechanism. 1-deoxy-D-xylulose 5-phosphate contacts are provided by Arg44 and His49. Residue Glu69 is the Proton acceptor of the active site. Thr99 is a 1-deoxy-D-xylulose 5-phosphate binding site. The active-site Proton donor is His186. Residues Gly187 and 208–209 contribute to the 3-amino-2-oxopropyl phosphate site; that span reads GH.

Belongs to the PNP synthase family. Homooctamer; tetramer of dimers.

Its subcellular location is the cytoplasm. It catalyses the reaction 3-amino-2-oxopropyl phosphate + 1-deoxy-D-xylulose 5-phosphate = pyridoxine 5'-phosphate + phosphate + 2 H2O + H(+). It functions in the pathway cofactor biosynthesis; pyridoxine 5'-phosphate biosynthesis; pyridoxine 5'-phosphate from D-erythrose 4-phosphate: step 5/5. Its function is as follows. Catalyzes the complicated ring closure reaction between the two acyclic compounds 1-deoxy-D-xylulose-5-phosphate (DXP) and 3-amino-2-oxopropyl phosphate (1-amino-acetone-3-phosphate or AAP) to form pyridoxine 5'-phosphate (PNP) and inorganic phosphate. In Anaplasma marginale (strain St. Maries), this protein is Pyridoxine 5'-phosphate synthase.